We begin with the raw amino-acid sequence, 464 residues long: Arginine biosynthesis bifunctional protein ArgJ, chloroplastic (464 aa).

The substrate site is built by Thr208, Lys234, Thr245, Glu332, Asn459, and Thr464. The Nucleophile role is filled by Thr245.

The protein belongs to the ArgJ family. As to quaternary structure, heterodimer of an alpha and a beta chain.

It is found in the plastid. It localises to the chloroplast. The catalysed reaction is N(2)-acetyl-L-ornithine + L-glutamate = N-acetyl-L-glutamate + L-ornithine. It carries out the reaction L-glutamate + acetyl-CoA = N-acetyl-L-glutamate + CoA + H(+). It participates in amino-acid biosynthesis; L-arginine biosynthesis; L-ornithine and N-acetyl-L-glutamate from L-glutamate and N(2)-acetyl-L-ornithine (cyclic): step 1/1. Its pathway is amino-acid biosynthesis; L-arginine biosynthesis; N(2)-acetyl-L-ornithine from L-glutamate: step 1/4. Its function is as follows. Catalyzes two activities which are involved in the cyclic version of arginine biosynthesis: the synthesis of acetylglutamate from glutamate and acetyl-CoA, and of ornithine by transacetylation between acetylornithine and glutamate. This is Arginine biosynthesis bifunctional protein ArgJ, chloroplastic from Sorghum bicolor (Sorghum).